The chain runs to 92 residues: Envelope glycoprotein J (92 aa).

The first 21 residues, 1–21 (MSLRAVWHLGLLGSLVGAVLA), serve as a signal peptide directing secretion. Topologically, residues 22 to 49 (ATHRGPAANTTDPLTHAPVSPHPSPLGG) are extracellular. An N-linked (GlcNAc...) asparagine; by host glycan is attached at Asn-30. Residues 50–70 (FAVPLVVGGLCAVVLGAACLL) form a helical membrane-spanning segment. Topologically, residues 71 to 92 (ELLRRTCRGWGRYHPYMDPVVV) are cytoplasmic.

This sequence belongs to the alphaherpesvirinae glycoprotein J family.

It is found in the host Golgi apparatus membrane. The protein resides in the host endoplasmic reticulum membrane. It localises to the host endosome membrane. In terms of biological role, inhibits host cell apoptosis. Induces an increase in reactive oxygen species (ROS) in the host cell. The sequence is that of Envelope glycoprotein J (gJ) from Homo sapiens (Human).